The chain runs to 276 residues: Palmitoyltransferase ZDHHC22 (276 aa).

Residues 1–9 lie on the Cytoplasmic side of the membrane; that stretch reads MGKLKLLNT. A helical transmembrane segment spans residues 10-30; sequence IAPAYFYAATVVTFALHFLLF. Over 31 to 45 the chain is Lumenal; the sequence is TPTIFQSSDVTINPA. Residues 46-66 form a helical membrane-spanning segment; sequence MLAHISIFLFLMGNALGNYIM. At 67 to 131 the chain is on the cytoplasmic side; sequence TIRNPSESAN…NCIGNRNMRY (65 aa). The DHHC domain occupies 101-137; the sequence is HFCKVCKKVILKRDHHCFFTGNCIGNRNMRYFIMFSI. Cysteine 117 functions as the S-palmitoyl cysteine intermediate in the catalytic mechanism. Residues 132–152 traverse the membrane as a helical segment; that stretch reads FIMFSIYTSSSCLYSLVIGVA. The Lumenal segment spans residues 153 to 165; it reads YLTIEYSISFENP. The chain crosses the membrane as a helical span at residues 166–186; it reads LTFLTLLPLSTGYFFLGLISG. Over 187–188 the chain is Cytoplasmic; sequence LQ. A helical transmembrane segment spans residues 189 to 209; that stretch reads FFLVIMLYIWLGIGLVSVGFC. Residues 210 to 276 lie on the Lumenal side of the membrane; it reads CQQLLLVARG…WQVYHDHKHD (67 aa).

Belongs to the DHHC palmitoyltransferase family.

The protein resides in the endoplasmic reticulum membrane. It is found in the golgi apparatus membrane. It carries out the reaction L-cysteinyl-[protein] + hexadecanoyl-CoA = S-hexadecanoyl-L-cysteinyl-[protein] + CoA. Its function is as follows. Palmitoyltransferase that could catalyze the addition of palmitate onto various protein substrates and be involved in a variety of cellular processes. The protein is Palmitoyltransferase ZDHHC22 (zdhhc22) of Danio rerio (Zebrafish).